Consider the following 280-residue polypeptide: Hydrolase MT0498 (280 aa).

Positions 1 to 251 (MRIALAQIRS…PQLLVADIDV (251 aa)) constitute a CN hydrolase domain. E40 functions as the Proton acceptor in the catalytic mechanism. K110 functions as the Proton donor in the catalytic mechanism. The active-site Nucleophile is C146.

It belongs to the carbon-nitrogen hydrolase superfamily. NIT1/NIT2 family.

The sequence is that of Hydrolase MT0498 from Mycobacterium tuberculosis (strain CDC 1551 / Oshkosh).